A 277-amino-acid polypeptide reads, in one-letter code: 3-methyl-2-oxobutanoate hydroxymethyltransferase (277 aa).

Mg(2+) is bound by residues Asp-53 and Asp-96. 3-methyl-2-oxobutanoate is bound by residues 53-54, Asp-96, and Lys-126; that span reads DS. Glu-128 contributes to the Mg(2+) binding site. The active-site Proton acceptor is the Glu-195.

Belongs to the PanB family. Homodecamer; pentamer of dimers. Mg(2+) is required as a cofactor.

The protein localises to the cytoplasm. The enzyme catalyses 3-methyl-2-oxobutanoate + (6R)-5,10-methylene-5,6,7,8-tetrahydrofolate + H2O = 2-dehydropantoate + (6S)-5,6,7,8-tetrahydrofolate. It functions in the pathway cofactor biosynthesis; (R)-pantothenate biosynthesis; (R)-pantoate from 3-methyl-2-oxobutanoate: step 1/2. Its function is as follows. Catalyzes the reversible reaction in which hydroxymethyl group from 5,10-methylenetetrahydrofolate is transferred onto alpha-ketoisovalerate to form ketopantoate. This chain is 3-methyl-2-oxobutanoate hydroxymethyltransferase, found in Chlorobium phaeobacteroides (strain BS1).